We begin with the raw amino-acid sequence, 1272 residues long: Protein diaphanous homolog 1 (1272 aa).

Methionine 1 carries the post-translational modification N-acetylmethionine. Positions 1 to 12 (MEPPGGSLGPGR) are enriched in gly residues. Residues 1–84 (MEPPGGSLGP…YGDDPTAQSL (84 aa)) form a disordered region. A phosphoserine mark is found at serine 7, serine 22, and serine 36. A compositionally biased stretch (basic and acidic residues) spans 44–65 (LMADELERFTSMRIKKEKEKPN). Over residues 67–84 (AHRNSSASYGDDPTAQSL) the composition is skewed to polar residues. In terms of domain architecture, GBD/FH3 spans 84 to 449 (LQDVSDEQVL…QIVLHKNGAD (366 aa)). The stretch at 468–572 (MIDKTKVEKS…ASLSAAAITV (105 aa)) forms a coiled coil. A disordered region spans residues 573-755 (PPSVPSRAPV…GMPPPPPFGF (183 aa)). Composition is skewed to pro residues over residues 574-589 (PSVPSRAPVPPAPPLP), 596-622 (IPPPPAPGDSTTPPPPPPPPPPPPPLP), and 640-658 (SPPPPLSGDATIPPPPPLP). The FH1 domain maps to 583 to 764 (PPAPPLPGDS…FGVPAAPVLP (182 aa)). The span at 659–674 (EGVGIPSPSSLPGGTA) shows a compositional bias: low complexity. Pro residues predominate over residues 675 to 753 (IPPPPPLPGS…GMGMPPPPPF (79 aa)). A Phosphothreonine modification is found at threonine 768. In terms of domain architecture, FH2 spans 769–1171 (PKKLYKPEVQ…MRRAKLAKEK (403 aa)). Residues 1039-1196 (DELAHVEKAS…IDMNAEGDET (158 aa)) are a coiled coil. Residues lysine 1057 and lysine 1103 each carry the N6-acetyllysine modification. Phosphotyrosine is present on tyrosine 1121. The 29-residue stretch at 1194-1222 (DETGVMDSLLEALQSGAAFRRKRGPRQAN) folds into the DAD domain. 2 positions are modified to phosphoserine: serine 1251 and serine 1254.

The protein belongs to the formin homology family. Diaphanous subfamily. Homodimer. Interacts with the GTP-bound form of RHOA. Interacts with RHOC, PFY1, MAPRE1 and BAIAP2. Interacts with APC; acts as a scaffold protein for MAPRE1 and APC to stabilize microtubules and promote cell migration. Interacts with SCAI. Interacts with DCAF7, via FH2 domain. Interacts with NCDN. Interacts with OSBPL10, OSBPL2, VIM, TUBB and DYN1. Phosphorylation at Thr-768 is stimulated by cAMP and regulates stability, complex formation and mitochondrial movement. Expressed in brain, heart, placenta, lung, kidney, pancreas, liver, skeletal muscle and cochlea. Expressed in platelets.

It localises to the cell membrane. Its subcellular location is the cell projection. The protein localises to the ruffle membrane. It is found in the cytoplasm. The protein resides in the cytoskeleton. It localises to the microtubule organizing center. Its subcellular location is the centrosome. The protein localises to the spindle. It is found in the nucleus. Functionally, actin nucleation and elongation factor required for the assembly of F-actin structures, such as actin cables and stress fibers. Binds to the barbed end of the actin filament and slows down actin polymerization and depolymerization. Required for cytokinesis, and transcriptional activation of the serum response factor. DFR proteins couple Rho and Src tyrosine kinase during signaling and the regulation of actin dynamics. Functions as a scaffold protein for MAPRE1 and APC to stabilize microtubules and promote cell migration. Has neurite outgrowth promoting activity. Acts in a Rho-dependent manner to recruit PFY1 to the membrane. In hear cells, it may play a role in the regulation of actin polymerization in hair cells. The MEMO1-RHOA-DIAPH1 signaling pathway plays an important role in ERBB2-dependent stabilization of microtubules at the cell cortex. It controls the localization of APC and CLASP2 to the cell membrane, via the regulation of GSK3B activity. In turn, membrane-bound APC allows the localization of the MACF1 to the cell membrane, which is required for microtubule capture and stabilization. Plays a role in the regulation of cell morphology and cytoskeletal organization. Required in the control of cell shape. Plays a role in brain development. Also acts as an actin nucleation and elongation factor in the nucleus by promoting nuclear actin polymerization inside the nucleus to drive serum-dependent SRF-MRTFA activity. This is Protein diaphanous homolog 1 (DIAPH1) from Homo sapiens (Human).